A 223-amino-acid chain; its full sequence is Lipoprotein signal peptidase (223 aa).

The tract at residues Met-1–Ser-20 is disordered. 4 helical membrane-spanning segments follow: residues Leu-32 to Phe-52, Trp-65 to Leu-85, Leu-91 to Phe-111, and Ser-116 to Asp-136. Catalysis depends on residues Asp-156 and Asp-175. The chain crosses the membrane as a helical span at residues Ile-173–Pro-193. Residues Pro-196–Ser-223 form a disordered region.

The protein belongs to the peptidase A8 family.

It localises to the cell inner membrane. The catalysed reaction is Release of signal peptides from bacterial membrane prolipoproteins. Hydrolyzes -Xaa-Yaa-Zaa-|-(S,diacylglyceryl)Cys-, in which Xaa is hydrophobic (preferably Leu), and Yaa (Ala or Ser) and Zaa (Gly or Ala) have small, neutral side chains.. It participates in protein modification; lipoprotein biosynthesis (signal peptide cleavage). Functionally, this protein specifically catalyzes the removal of signal peptides from prolipoproteins. This is Lipoprotein signal peptidase from Rhodopirellula baltica (strain DSM 10527 / NCIMB 13988 / SH1).